A 142-amino-acid polypeptide reads, in one-letter code: Bacilliredoxin ABC2448 (142 aa).

This sequence belongs to the bacilliredoxin family.

The chain is Bacilliredoxin ABC2448 from Shouchella clausii (strain KSM-K16) (Alkalihalobacillus clausii).